The primary structure comprises 651 residues: p-hydroxybenzoic acid efflux pump subunit AaeB (651 aa).

A run of 11 helical transmembrane segments spans residues phenylalanine 11 to methionine 31, alanine 41 to isoleucine 61, glycine 65 to threonine 85, valine 91 to valine 111, tyrosine 117 to proline 137, glutamate 150 to valine 170, leucine 367 to valine 387, phenylalanine 404 to proline 424, glutamine 428 to isoleucine 448, glycine 454 to phenylalanine 474, and leucine 480 to isoleucine 500.

Belongs to the aromatic acid exporter ArAE (TC 2.A.85) family.

Its subcellular location is the cell inner membrane. In terms of biological role, forms an efflux pump with AaeA. Could function as a metabolic relief valve, allowing to eliminate certain compounds when they accumulate to high levels in the cell. The sequence is that of p-hydroxybenzoic acid efflux pump subunit AaeB from Musicola paradisiaca (strain Ech703) (Dickeya paradisiaca).